We begin with the raw amino-acid sequence, 107 residues long: uncharacterized protein (107 aa).

3 consecutive transmembrane segments (helical) span residues 16–36, 47–67, and 85–105; these read VIPC…SESL, IISL…HSLV, and LIVL…TSLI.

Its subcellular location is the membrane. This is an uncharacterized protein from Saccharomyces cerevisiae (strain ATCC 204508 / S288c) (Baker's yeast).